Here is a 209-residue protein sequence, read N- to C-terminus: Orotate phosphoribosyltransferase (209 aa).

Residues Arg-96, Lys-100, His-102, and 122-130 contribute to the 5-phospho-alpha-D-ribose 1-diphosphate site; that span reads EDLISTGGS. An orotate-binding site is contributed by Ser-126.

Belongs to the purine/pyrimidine phosphoribosyltransferase family. PyrE subfamily. As to quaternary structure, homodimer. Requires Mg(2+) as cofactor.

The catalysed reaction is orotidine 5'-phosphate + diphosphate = orotate + 5-phospho-alpha-D-ribose 1-diphosphate. Its pathway is pyrimidine metabolism; UMP biosynthesis via de novo pathway; UMP from orotate: step 1/2. Catalyzes the transfer of a ribosyl phosphate group from 5-phosphoribose 1-diphosphate to orotate, leading to the formation of orotidine monophosphate (OMP). The chain is Orotate phosphoribosyltransferase from Streptococcus agalactiae serotype Ia (strain ATCC 27591 / A909 / CDC SS700).